The following is a 25-amino-acid chain: Arginine attenuator peptide (25 aa).

It belongs to the arginine attenuator peptide family.

In terms of biological role, arginine attenuator peptide (AAP) that has a regulatory role in the production of arginine-specific carbamoyl phosphate synthetase. Encoded by an upstream open reading frame (uORF) within the 5'-leader region of arginine-specific carbamoyl phosphate synthetase small chain (CPA1) mRNA, it attenuates the translation of the downstream CPA1 ORF. In the presence of high concentrations of arginine, ribosomes translating the uORF encoding AAP stall at the termination codon, resulting in reduced translation from the downstream CPA1 initiation codon. The protein is Arginine attenuator peptide of Saccharomyces cerevisiae (strain ATCC 204508 / S288c) (Baker's yeast).